A 141-amino-acid polypeptide reads, in one-letter code: D-aminoacyl-tRNA deacylase (141 aa).

The Gly-cisPro motif, important for rejection of L-amino acids motif lies at 133–134 (GP).

This sequence belongs to the DTD family. In terms of assembly, homodimer.

It localises to the cytoplasm. It carries out the reaction glycyl-tRNA(Ala) + H2O = tRNA(Ala) + glycine + H(+). The catalysed reaction is a D-aminoacyl-tRNA + H2O = a tRNA + a D-alpha-amino acid + H(+). Functionally, an aminoacyl-tRNA editing enzyme that deacylates mischarged D-aminoacyl-tRNAs. Also deacylates mischarged glycyl-tRNA(Ala), protecting cells against glycine mischarging by AlaRS. Acts via tRNA-based rather than protein-based catalysis; rejects L-amino acids rather than detecting D-amino acids in the active site. By recycling D-aminoacyl-tRNA to D-amino acids and free tRNA molecules, this enzyme counteracts the toxicity associated with the formation of D-aminoacyl-tRNA entities in vivo and helps enforce protein L-homochirality. This Nautilia profundicola (strain ATCC BAA-1463 / DSM 18972 / AmH) protein is D-aminoacyl-tRNA deacylase.